The chain runs to 294 residues: 4-hydroxybenzoate octaprenyltransferase (294 aa).

The next 8 helical transmembrane spans lie at 20–42 (LLRIDRPIGTLLLLWPTYWALWL), 98–118 (WEAVALFAGLCLVSFLMVVLF), 120–140 (NTLTLYLSFGGALLAFIYPFM), 145–165 (HLPQLFLGAAFSWAIPMAWAA), 175–195 (WLLFTANVLWTVAYDTLYAMV), 218–238 (AIIALLQTMVVVILVMVGQRA), 242–262 (SFYYLGVVAMATLFVYHQYLA), and 274–294 (FLNNNWAGFAVFLGLALDLAF).

The protein belongs to the UbiA prenyltransferase family. The cofactor is Mg(2+).

Its subcellular location is the cell inner membrane. It catalyses the reaction all-trans-octaprenyl diphosphate + 4-hydroxybenzoate = 4-hydroxy-3-(all-trans-octaprenyl)benzoate + diphosphate. Its pathway is cofactor biosynthesis; ubiquinone biosynthesis. Functionally, catalyzes the prenylation of para-hydroxybenzoate (PHB) with an all-trans polyprenyl group. Mediates the second step in the final reaction sequence of ubiquinone-8 (UQ-8) biosynthesis, which is the condensation of the polyisoprenoid side chain with PHB, generating the first membrane-bound Q intermediate 3-octaprenyl-4-hydroxybenzoate. The sequence is that of 4-hydroxybenzoate octaprenyltransferase from Marinobacter nauticus (strain ATCC 700491 / DSM 11845 / VT8) (Marinobacter aquaeolei).